A 138-amino-acid polypeptide reads, in one-letter code: ATP synthase epsilon chain 1 (138 aa).

This sequence belongs to the ATPase epsilon chain family. F-type ATPases have 2 components, CF(1) - the catalytic core - and CF(0) - the membrane proton channel. CF(1) has five subunits: alpha(3), beta(3), gamma(1), delta(1), epsilon(1). CF(0) has three main subunits: a, b and c.

Its subcellular location is the cell inner membrane. In terms of biological role, produces ATP from ADP in the presence of a proton gradient across the membrane. The sequence is that of ATP synthase epsilon chain 1 from Syntrophotalea carbinolica (strain DSM 2380 / NBRC 103641 / GraBd1) (Pelobacter carbinolicus).